The following is a 142-amino-acid chain: Phosphoribosyl-AMP cyclohydrolase (142 aa).

Aspartate 85 is a Mg(2+) binding site. Cysteine 86 is a binding site for Zn(2+). Mg(2+) contacts are provided by aspartate 87 and aspartate 89. Cysteine 102 and cysteine 109 together coordinate Zn(2+). The segment at 120–142 (GEPPTPVGAGERQPASGTADAAP) is disordered.

The protein belongs to the PRA-CH family. As to quaternary structure, homodimer. Requires Mg(2+) as cofactor. Zn(2+) serves as cofactor.

Its subcellular location is the cytoplasm. It catalyses the reaction 1-(5-phospho-beta-D-ribosyl)-5'-AMP + H2O = 1-(5-phospho-beta-D-ribosyl)-5-[(5-phospho-beta-D-ribosylamino)methylideneamino]imidazole-4-carboxamide. Its pathway is amino-acid biosynthesis; L-histidine biosynthesis; L-histidine from 5-phospho-alpha-D-ribose 1-diphosphate: step 3/9. Functionally, catalyzes the hydrolysis of the adenine ring of phosphoribosyl-AMP. The chain is Phosphoribosyl-AMP cyclohydrolase from Acidothermus cellulolyticus (strain ATCC 43068 / DSM 8971 / 11B).